The sequence spans 2588 residues: Histone-lysine N-methyltransferase, H3 lysine-36 specific (2588 aa).

A phosphoserine mark is found at Ser110 and Ser118. 2 disordered regions span residues 209–264 and 277–307; these read GSEQ…LGDT and LSFQ…TSQE. Basic and acidic residues predominate over residues 235–249; that stretch reads EKQKNKQRSEVDGSN. Residues 298–307 are compositionally biased toward polar residues; that stretch reads GTSSPSTSQE. Phosphoserine occurs at positions 380 and 383. The disordered stretch occupies residues 383–403; that stretch reads SADEKEKPCAKSRVRKSSDNI. Lys802 is covalently cross-linked (Glycyl lysine isopeptide (Lys-Gly) (interchain with G-Cter in SUMO2)). Disordered regions lie at residues 830–899, 947–987, and 1008–1133; these read ASYR…SDKR, ERKR…PGKE, and FDSK…PRLN. Positions 855–874 are enriched in polar residues; the sequence is GSSTPNSEKPGDSTQDSVHQ. Low complexity predominate over residues 881 to 895; it reads SALSGELSSSLSSLA. The segment covering 1008-1033 has biased composition (basic and acidic residues); the sequence is FDSKAKQSDPDKNLEKEPSFENRKGP. Basic residues predominate over residues 1054–1073; the sequence is PKKRWQRLNQRRPKPGKRAN. Lys1237 is covalently cross-linked (Glycyl lysine isopeptide (Lys-Gly) (interchain with G-Cter in SUMO2)). Residues 1279–1324 form a disordered region; it reads ASPRPALESEELLVKTPGNYESKRQRKPTKKLLESNDLDPGFMPKK. Ser1408 carries the phosphoserine modification. PHD-type zinc fingers lie at residues 1441-1487, 1488-1544, and 1605-1649; these read ENVC…CHTG, IHTC…CHAA, and VSWC…CKAG. The PWWP domain occupies 1654 to 1716; the sequence is YREIVWVKVG…QARVFPYMEG (63 aa). Positions 1788-1838 constitute an AWS domain; it reads SEIPRCNCKATDENPCGIDSECINRMLLYECHPTVCPAGVRCQNQCFSKRQ. One can recognise an SET domain in the interval 1840–1957; it reads PDVEIFRTLQ…AGTELTFNYN (118 aa). S-adenosyl-L-methionine-binding positions include 1850–1852, 1892–1895, 1918–1919, Asn1963, and Lys1969; these read RGW, TNFY, and NH. Residues 1958 to 1964 are inhibits enzyme activity in the absence of bound histone; it reads LECLGNG. The Post-SET domain maps to 1964 to 1980; the sequence is GKTVCKCGAPNCSGFLG. Positions 1989 to 2010 are disordered; the sequence is VTEEKSRKFKRKPHGKRRSQGE. Residues 1995–2006 show a composition bias toward basic residues; the sequence is RKFKRKPHGKRR. The PHD-type 4; atypical zinc finger occupies 2016 to 2063; sequence EDECFSCGDAGQLVSCKKPGCPKVYHADCLNLTKRPAGKWECPWHQCD. Disordered stretches follow at residues 2105-2320, 2333-2423, 2447-2521, and 2560-2588; these read PCGP…PPPE, KEKA…PSEH, YESA…WGLG, and RGQD…SEKK. Residues 2179 to 2196 show a composition bias toward basic and acidic residues; sequence RPPERTDSSSHLLDRIRD. Over residues 2201–2212 the composition is skewed to polar residues; that stretch reads GTKSQSLVSSQR. Positions 2213-2223 are enriched in basic and acidic residues; the sequence is PQDRPPAKEGP. Residues 2232–2249 show a composition bias toward low complexity; that stretch reads SPMTRPSSSPSVSSLPLE. Residues 2250–2261 are compositionally biased toward basic and acidic residues; the sequence is RPLRMTDSRLDK. A Phosphoserine modification is found at Ser2267. Thr2360 carries the phosphothreonine modification. Ser2369 carries the phosphoserine modification. Lys2509 participates in a covalent cross-link: Glycyl lysine isopeptide (Lys-Gly) (interchain with G-Cter in SUMO2).

The protein belongs to the class V-like SAM-binding methyltransferase superfamily. In terms of assembly, interacts with AR DNA- and ligand-binding domains. Interacts with the ligand-binding domains of RARA and THRA in the absence of ligand; in the presence of ligand the interaction is severely disrupted but some binding still occurs. Interacts with the ligand-binding domains of RXRA and ESRRA only in the presence of ligand. Interacts with ZNF496. As to expression, expressed in the embryo and the outer region of the uterine decidua at early post-implantation 5.5 dpc stage. Uniformly expressed in embryonic and extraembryonic tissues during gastrulation stage 7.5 dpc. Expressed differentially after stage 14.5 dpc with highest expression in proliferating cells. Enriched in the telencephalic region of the brain, spinal cord, intestinal crypt, tooth buds, thymus and salivary glands at stage 16.5 dpc. Also expressed in the ossification region of developing bones and in the periosteum.

Its subcellular location is the nucleus. The protein localises to the chromosome. It carries out the reaction L-lysyl(36)-[histone H3] + 2 S-adenosyl-L-methionine = N(6),N(6)-dimethyl-L-lysyl(36)-[histone H3] + 2 S-adenosyl-L-homocysteine + 2 H(+). Functionally, histone methyltransferase that dimethylates Lys-36 of histone H3 (H3K36me2). Transcriptional intermediary factor capable of negatively influencing transcription. May also positively influence transcription. Essential for early post-implantation development. The protein is Histone-lysine N-methyltransferase, H3 lysine-36 specific of Mus musculus (Mouse).